The primary structure comprises 414 residues: Phosphoglycerate kinase (414 aa).

Residues valine 23, aspartate 24, phenylalanine 25, asparagine 26, arginine 39, serine 62, histidine 63, glycine 65, and arginine 66 each contribute to the (2R)-3-phosphoglycerate site. Phosphotyrosine is present on tyrosine 75. Phosphoserine is present on serine 76. 2 residues coordinate (2R)-3-phosphoglycerate: leucine 121 and arginine 122. The residue at position 143 (serine 143) is a Phosphoserine. (2R)-3-phosphoglycerate-binding residues include histidine 168 and arginine 169. Residues serine 172, serine 173, and serine 183 each carry the phosphoserine modification. Glycine 211 provides a ligand contact to ADP. Glycine 211 contributes to the CDP binding site. AMP contacts are provided by alanine 212 and lysine 213. An ATP-binding site is contributed by alanine 212. Alanine 212 lines the Mg(2+) pocket. 2 residues coordinate Mg(2+): alanine 215 and aspartate 216. Aspartate 216 serves as a coordination point for CDP. AMP is bound at residue lysine 217. Residue lysine 217 coordinates ATP. An ADP-binding site is contributed by glycine 235. Glycine 235 provides a ligand contact to CDP. Glycine 236 serves as a coordination point for AMP. Glycine 236 contributes to the ATP binding site. Residues serine 253 and serine 260 each carry the phosphoserine modification. Phosphothreonine is present on threonine 299. An AMP-binding site is contributed by glycine 310. Residue glycine 310 coordinates ATP. At serine 328 the chain carries Phosphoserine. Residues glycine 335, alanine 337, and phenylalanine 340 each contribute to the CDP site. Residue phenylalanine 340 participates in ADP binding. Position 341 (glutamate 341) interacts with AMP. Residue glutamate 341 participates in ATP binding. Serine 351 carries the phosphoserine modification. ATP-binding residues include aspartate 372 and threonine 373. Residue aspartate 372 coordinates Mg(2+). Phosphothreonine is present on threonine 373. Residues serine 387, serine 390, serine 412, and serine 413 each carry the phosphoserine modification.

It belongs to the phosphoglycerate kinase family. Monomer. Mg(2+) is required as a cofactor.

It localises to the cytoplasm. Its subcellular location is the mitochondrion. It carries out the reaction (2R)-3-phosphoglycerate + ATP = (2R)-3-phospho-glyceroyl phosphate + ADP. It participates in carbohydrate degradation; glycolysis; pyruvate from D-glyceraldehyde 3-phosphate: step 2/5. Catalyzes one of the two ATP producing reactions in the glycolytic pathway via the reversible conversion of 1,3-diphosphoglycerate to 3-phosphoglycerate. Both L- and D- forms of purine and pyrimidine nucleotides can be used as substrates, but the activity is much lower on pyrimidines. Negatively regulates the biosynthesis of acetyl-CoA from pyruvate in the mitochondrion. The protein is Phosphoglycerate kinase (pgk1) of Schizosaccharomyces pombe (strain 972 / ATCC 24843) (Fission yeast).